A 1079-amino-acid polypeptide reads, in one-letter code: Electrogenic sodium bicarbonate cotransporter 1 (1079 aa).

The tract at residues 1 to 62 is required for interaction with AHCYL1; sequence MEDEAVLDRG…EKKEKERISE (62 aa). Residues 1-466 lie on the Cytoplasmic side of the membrane; the sequence is MEDEAVLDRG…FASDFYDALN (466 aa). Glu-21 carries the post-translational modification Phosphoserine. Tyr-30 is modified (phosphotyrosine). The span at 39-52 shows a compositional bias: basic residues; that stretch reads YRRRRRHKRKAGHK. A disordered region spans residues 39–78; that stretch reads YRRRRRHKRKAGHKEKKEKERISENYSDKSDVENADESSS. Over residues 53-70 the composition is skewed to basic and acidic residues; it reads EKKEKERISENYSDKSDV. Phosphoserine is present on residues Ser-61, Ser-65, Ser-68, Ser-223, Ser-232, Ser-233, and Ser-245. The interval 235 to 266 is disordered; it reads SRMFSNPDNGSPAMTHRNLTSSSLNDISDKPE. Phosphothreonine is present on residues Thr-249 and Thr-254. The segment covering 251 to 260 has biased composition (polar residues); the sequence is RNLTSSSLND. A phosphoserine mark is found at Ser-256, Ser-257, and Ser-262. Residues 467 to 491 traverse the membrane as a helical segment; it reads IQALSAILFIYLATVTNAITFGGLL. At 492-501 the chain is on the extracellular side; sequence GDATDNMQGV. The chain crosses the membrane as a helical span at residues 502-520; it reads LESFLGTAVSGAIFCLFAG. Residue Gln-521 is a topological domain, cytoplasmic. Residues 522–542 traverse the membrane as a discontinuously helical segment; the sequence is PLTILSSTGPVLVFERLLFNF. Residues 543–550 lie on the Extracellular side of the membrane; that stretch reads SKDHNFDY. The helical transmembrane segment at 551–571 threads the bilayer; that stretch reads LEFRLWIGLWSAFMCLVLVAT. Residues 572 to 585 lie on the Cytoplasmic side of the membrane; that stretch reads DASFLVQYFTRFTE. Residues 586–609 traverse the membrane as a helical segment; the sequence is EGFSSLISFIFIYDAFKKMIKLAD. Residues 610–692 are Extracellular-facing; that stretch reads YYPINSDFKV…GNNCDFVPDI (83 aa). Residues 693–710 form a helical membrane-spanning segment; sequence TLMSFILFLGTYTSSMAM. Residues 711-725 are Cytoplasmic-facing; the sequence is KKFKTSRYFPTTARK. Residues 726 to 745 traverse the membrane as a helical segment; it reads LISDFAIILSILIFCVIDAL. The Extracellular portion of the chain corresponds to 746–779; sequence VGVDTPKLIVPSEFKPTSPNRGWFVPPFGGNPWW. Residues 748 to 779 are interaction with CA4; sequence VDTPKLIVPSEFKPTSPNRGWFVPPFGGNPWW. The chain crosses the membrane as a helical span at residues 780–807; the sequence is VCLAAAIPALLVTILIFMDQQITAVIVN. Residues 808–819 are Cytoplasmic-facing; sequence RKEHKLKKGAGY. A helical transmembrane segment spans residues 820–836; it reads HLDLFWVAILMVVCSFM. A topological domain (extracellular) is located at residue Ala-837. A discontinuously helical membrane pass occupies residues 838–855; sequence LPWYVAATVISIAHIDSL. The Cytoplasmic segment spans residues 856–877; the sequence is KMETETSAPGEQPKFLGVREQR. A helical membrane pass occupies residues 878–894; sequence VTGTLVFILTGLSVFMA. Residues 895-901 lie on the Extracellular side of the membrane; it reads PILKFIP. Residues 902-918 form a helical membrane-spanning segment; the sequence is MPVLYGVFLYMGVASLN. The Cytoplasmic segment spans residues 919-960; sequence GVQFMDRLKLLLMPLKHQPDFIYLRHVPLRRVHLFTFLQVLC. The segment at residues 961–986 is an intramembrane region (discontinuously helical); sequence LALLWILKSTVAAIIFPVMILALVAV. The Cytoplasmic portion of the chain corresponds to 987–1079; sequence RKGMDYLFSQ…STFLERHTSC (93 aa). The interval 1002–1004 is CA2-binding; it reads LDD. The disordered stretch occupies residues 1012–1079; the sequence is KKKEDEKKKK…STFLERHTSC (68 aa). 2 positions are modified to phosphoserine: Ser-1026 and Ser-1029. The tract at residues 1030-1033 is CA2-binding; the sequence is DNDD. Residues Ser-1034 and Ser-1044 each carry the phosphoserine modification. The interval 1057 to 1059 is required for basolateral targeting; sequence FLS. Residues 1062-1079 show a composition bias toward basic and acidic residues; the sequence is KPLDRERSSTFLERHTSC. A Phosphoserine modification is found at Ser-1069.

This sequence belongs to the anion exchanger (TC 2.A.31) family. As to quaternary structure, homodimer. Interacts with CA2/carbonic anhydrase 2 and CA4/carbonic anhydrase 4 which may regulate transporter activity. Isoform 1 but not isoform 2 interacts with AHCYL1 (via PEST domain when phosphorylated); the interaction increases SLC4A4 isoform 1 activity. Interacts with AHCYL2. Post-translationally, phosphorylation of Ser-1026 by PKA increases the binding of CA2 and changes the Na(+):HCO3(-) stoichiometry of the transporter from 3:1 to 2:1. Phosphorylated in presence of STK39 and dephosphorylated in presence of PP1 phosphatase; phosphorylation seems to inhibit SLC4A4 activity. In terms of processing, N-glycosylated. May not be necessary for the transporter basic functions. In terms of tissue distribution, isoform 1 is specifically expressed in pancreatic ducts and acini. Also expressed in parotid acinar cells and in the colonic crypts.

The protein localises to the basolateral cell membrane. The protein resides in the cell membrane. It carries out the reaction 2 hydrogencarbonate(out) + Na(+)(out) = 2 hydrogencarbonate(in) + Na(+)(in). The enzyme catalyses 3 hydrogencarbonate(out) + Na(+)(out) = 3 hydrogencarbonate(in) + Na(+)(in). Its activity is regulated as follows. Activated by cyclic AMP. Electrogenic sodium/bicarbonate cotransporter with a Na(+):HCO3(-) stoichiometry varying from 1:2 to 1:3. May regulate bicarbonate influx/efflux at the basolateral membrane of cells and regulate intracellular pH. This Mus musculus (Mouse) protein is Electrogenic sodium bicarbonate cotransporter 1 (Slc4a4).